A 565-amino-acid polypeptide reads, in one-letter code: Membrane protein insertase YidC (565 aa).

6 consecutive transmembrane segments (helical) span residues 6–26, 348–368, 370–390, 437–457, 479–499, and 516–536; these read VLLI…WSKN, LMAL…SLLH, WGWA…PLSA, GGCF…WVLV, PYFI…KLTP, and PLIF…YWVI.

It belongs to the OXA1/ALB3/YidC family. Type 1 subfamily. Interacts with the Sec translocase complex via SecD. Specifically interacts with transmembrane segments of nascent integral membrane proteins during membrane integration.

Its subcellular location is the cell inner membrane. Required for the insertion and/or proper folding and/or complex formation of integral membrane proteins into the membrane. Involved in integration of membrane proteins that insert both dependently and independently of the Sec translocase complex, as well as at least some lipoproteins. Aids folding of multispanning membrane proteins. In Xylella fastidiosa (strain M23), this protein is Membrane protein insertase YidC.